The primary structure comprises 475 residues: Tubulin epsilon chain (475 aa).

Residue 148-154 (GGGTGSG) participates in GTP binding.

The protein belongs to the tubulin family. In terms of assembly, found in a complex with TEDC1, TEDC2, TUBE1 and TUBD1.

Its subcellular location is the cytoplasm. The protein localises to the cytoskeleton. It localises to the microtubule organizing center. It is found in the centrosome. This chain is Tubulin epsilon chain (Tube1), found in Mus musculus (Mouse).